Consider the following 302-residue polypeptide: Ethylmalonyl-CoA decarboxylase (302 aa).

The protein belongs to the enoyl-CoA hydratase/isomerase family.

The protein resides in the cytoplasm. It localises to the cytosol. The catalysed reaction is (2S)-ethylmalonyl-CoA + H(+) = butanoyl-CoA + CO2. It catalyses the reaction (S)-methylmalonyl-CoA + H(+) = propanoyl-CoA + CO2. It carries out the reaction (2R)-ethylmalonyl-CoA + H(+) = butanoyl-CoA + CO2. Decarboxylates ethylmalonyl-CoA, a potentially toxic metabolite, to form butyryl-CoA, suggesting it might be involved in metabolite proofreading. Acts preferentially on (S)-ethylmalonyl-CoA but also has some activity on the (R)-isomer. Also has methylmalonyl-CoA decarboxylase activity at lower level. The sequence is that of Ethylmalonyl-CoA decarboxylase (echdc1) from Danio rerio (Zebrafish).